A 249-amino-acid chain; its full sequence is MPIRYISQKLAQQIDVELMSASGAFSLDQLMELAGLSCAQALAKSFPPTKHKHVMVACGPGNQGGDGLVAARHLHHFSYTPTVYLPKPSSKDFLQRLVKQCENLNIPILKDVDAFQTELAKSDVILDAIFGFSFQPPLRKPFDQVLKAIKGVSKKIPIVSVDIPSGWSVTDGPQPLWTEEDDKGGKEMIETFEPEVLVSLTAPKEGVKAFKGQHWLGGRFVPDELGKKHELNIPPYEGIDQVVELPRNH.

The 223-residue stretch at 11–233 (AQQIDVELMS…ELGKKHELNI (223 aa)) folds into the YjeF N-terminal domain. Position 62 to 66 (62 to 66 (NQGGD)) interacts with (6S)-NADPHX. Q63 and D127 together coordinate K(+). Residues 131 to 137 (GFSFQPP) and D162 each bind (6S)-NADPHX. S165 is a binding site for K(+).

The protein belongs to the NnrE/AIBP family. K(+) is required as a cofactor.

It localises to the cytoplasm. The protein resides in the mitochondrion. It catalyses the reaction (6R)-NADHX = (6S)-NADHX. It carries out the reaction (6R)-NADPHX = (6S)-NADPHX. In terms of biological role, catalyzes the epimerization of the S- and R-forms of NAD(P)HX, a damaged form of NAD(P)H that is a result of enzymatic or heat-dependent hydration. This is a prerequisite for the S-specific NAD(P)H-hydrate dehydratase to allow the repair of both epimers of NAD(P)HX. The protein is NAD(P)H-hydrate epimerase of Cryptococcus neoformans var. neoformans serotype D (strain JEC21 / ATCC MYA-565) (Filobasidiella neoformans).